A 117-amino-acid polypeptide reads, in one-letter code: Putative pterin-4-alpha-carbinolamine dehydratase (117 aa).

The protein belongs to the pterin-4-alpha-carbinolamine dehydratase family.

It catalyses the reaction (4aS,6R)-4a-hydroxy-L-erythro-5,6,7,8-tetrahydrobiopterin = (6R)-L-erythro-6,7-dihydrobiopterin + H2O. The polypeptide is Putative pterin-4-alpha-carbinolamine dehydratase (Aeromonas salmonicida (strain A449)).